Consider the following 219-residue polypeptide: Elongation factor Ts (219 aa).

The involved in Mg(2+) ion dislocation from EF-Tu stretch occupies residues 82 to 85; sequence TDFV.

This sequence belongs to the EF-Ts family.

Its subcellular location is the cytoplasm. Associates with the EF-Tu.GDP complex and induces the exchange of GDP to GTP. It remains bound to the aminoacyl-tRNA.EF-Tu.GTP complex up to the GTP hydrolysis stage on the ribosome. This is Elongation factor Ts from Anaeromyxobacter sp. (strain K).